The chain runs to 404 residues: Nicotinate phosphoribosyltransferase (404 aa).

The residue at position 225 (H225) is a Phosphohistidine; by autocatalysis.

The protein belongs to the NAPRTase family. In terms of processing, transiently phosphorylated on a His residue during the reaction cycle. Phosphorylation strongly increases the affinity for substrates and increases the rate of nicotinate D-ribonucleotide production. Dephosphorylation regenerates the low-affinity form of the enzyme, leading to product release.

The enzyme catalyses nicotinate + 5-phospho-alpha-D-ribose 1-diphosphate + ATP + H2O = nicotinate beta-D-ribonucleotide + ADP + phosphate + diphosphate. It participates in cofactor biosynthesis; NAD(+) biosynthesis; nicotinate D-ribonucleotide from nicotinate: step 1/1. In terms of biological role, catalyzes the synthesis of beta-nicotinate D-ribonucleotide from nicotinate and 5-phospho-D-ribose 1-phosphate at the expense of ATP. In Acinetobacter baumannii (strain ATCC 17978 / DSM 105126 / CIP 53.77 / LMG 1025 / NCDC KC755 / 5377), this protein is Nicotinate phosphoribosyltransferase.